Reading from the N-terminus, the 333-residue chain is Glycerol-3-phosphate dehydrogenase [NAD(P)+] (333 aa).

Residues Trp11, Arg34, and Lys107 each coordinate NADPH. Sn-glycerol 3-phosphate is bound by residues Lys107, Gly136, and Ser138. An NADPH-binding site is contributed by Ala140. Residues Lys191, Asp244, Ser254, Arg255, and Asn256 each coordinate sn-glycerol 3-phosphate. Lys191 (proton acceptor) is an active-site residue. Arg255 contacts NADPH. Residues Ile279 and Glu281 each contribute to the NADPH site.

Belongs to the NAD-dependent glycerol-3-phosphate dehydrogenase family.

It localises to the cytoplasm. The enzyme catalyses sn-glycerol 3-phosphate + NAD(+) = dihydroxyacetone phosphate + NADH + H(+). It carries out the reaction sn-glycerol 3-phosphate + NADP(+) = dihydroxyacetone phosphate + NADPH + H(+). The protein operates within membrane lipid metabolism; glycerophospholipid metabolism. In terms of biological role, catalyzes the reduction of the glycolytic intermediate dihydroxyacetone phosphate (DHAP) to sn-glycerol 3-phosphate (G3P), the key precursor for phospholipid synthesis. The protein is Glycerol-3-phosphate dehydrogenase [NAD(P)+] of Nitrosospira multiformis (strain ATCC 25196 / NCIMB 11849 / C 71).